Here is a 636-residue protein sequence, read N- to C-terminus: tRNA 5-methylaminomethyl-2-thiouridine biosynthesis bifunctional protein MnmC (636 aa).

The tRNA (mnm(5)s(2)U34)-methyltransferase stretch occupies residues 1 to 202 (MTVSKILKQV…ERAALRAQSH (202 aa)). The FAD-dependent cmnm(5)s(2)U34 oxidoreductase stretch occupies residues 227 to 636 (IGGGVASACL…GKALEMSGKS (410 aa)).

In the N-terminal section; belongs to the methyltransferase superfamily. tRNA (mnm(5)s(2)U34)-methyltransferase family. This sequence in the C-terminal section; belongs to the DAO family. FAD serves as cofactor.

Its subcellular location is the cytoplasm. The catalysed reaction is 5-aminomethyl-2-thiouridine(34) in tRNA + S-adenosyl-L-methionine = 5-methylaminomethyl-2-thiouridine(34) in tRNA + S-adenosyl-L-homocysteine + H(+). In terms of biological role, catalyzes the last two steps in the biosynthesis of 5-methylaminomethyl-2-thiouridine (mnm(5)s(2)U) at the wobble position (U34) in tRNA. Catalyzes the FAD-dependent demodification of cmnm(5)s(2)U34 to nm(5)s(2)U34, followed by the transfer of a methyl group from S-adenosyl-L-methionine to nm(5)s(2)U34, to form mnm(5)s(2)U34. In Shewanella halifaxensis (strain HAW-EB4), this protein is tRNA 5-methylaminomethyl-2-thiouridine biosynthesis bifunctional protein MnmC.